Consider the following 686-residue polypeptide: Protein arginine N-methyltransferase 7 (686 aa).

2 SAM-dependent MTase PRMT-type domains span residues 5–352 (SDDY…FSWW) and 357–686 (DLSL…FKFD).

Belongs to the class I-like SAM-binding methyltransferase superfamily. Protein arginine N-methyltransferase family. PRMT7 subfamily.

Functionally, essential arginine methyltransferase that can both catalyze the formation of omega-N monomethylarginine (MMA) and symmetrical dimethylarginine (sDMA). Specifically mediates the symmetrical dimethylation of arginine residues in the small nuclear ribonucleoproteins SmD1 and SmD3. This Aedes aegypti (Yellowfever mosquito) protein is Protein arginine N-methyltransferase 7 (Art7).